The primary structure comprises 582 residues: TRAF-type zinc finger domain-containing protein 1 (582 aa).

Residue A2 is modified to N-acetylalanine. A TRAF-type zinc finger spans residues I27 to K103. S191 bears the Phosphoserine mark. The segment at E217–E236 is disordered. S278, S320, S326, S327, S409, S415, S430, and S470 each carry phosphoserine. Residues T401–E582 form a disordered region. Composition is skewed to polar residues over residues P454–G471 and L486–Q495.

As to quaternary structure, interacts with MAVS, TICAM1, TRAF1, TRAF2, TRAF3. Interacts with TRAF6.

Its function is as follows. Negative feedback regulator that controls excessive innate immune responses. Regulates both Toll-like receptor 4 (TLR4) and DDX58/RIG1-like helicases (RLH) pathways. May inhibit the LTR pathway by direct interaction with TRAF6 and attenuation of NF-kappa-B activation. May negatively regulate the RLH pathway downstream from MAVS and upstream of NF-kappa-B and IRF3. The chain is TRAF-type zinc finger domain-containing protein 1 (TRAFD1) from Homo sapiens (Human).